A 326-amino-acid polypeptide reads, in one-letter code: Ribonuclease Z (326 aa).

H62, H64, D66, H67, H140, D211, and H269 together coordinate Zn(2+). D66 functions as the Proton acceptor in the catalytic mechanism.

Belongs to the RNase Z family. In terms of assembly, homodimer. Zn(2+) is required as a cofactor.

The enzyme catalyses Endonucleolytic cleavage of RNA, removing extra 3' nucleotides from tRNA precursor, generating 3' termini of tRNAs. A 3'-hydroxy group is left at the tRNA terminus and a 5'-phosphoryl group is left at the trailer molecule.. Zinc phosphodiesterase, which displays some tRNA 3'-processing endonuclease activity. Probably involved in tRNA maturation, by removing a 3'-trailer from precursor tRNA. This Synechocystis sp. (strain ATCC 27184 / PCC 6803 / Kazusa) protein is Ribonuclease Z.